Reading from the N-terminus, the 313-residue chain is D-alanine--D-alanine ligase (313 aa).

One can recognise an ATP-grasp domain in the interval 108 to 308 (KLVWQQTGVP…YSELVVKVLS (201 aa)). Residue 138-193 (VAKLGLPLFVKPASEGSSVAVLKVKTADALPAALSEAATHDKIVIVEKSIEGGGEY) participates in ATP binding. Residues aspartate 262, glutamate 275, and asparagine 277 each contribute to the Mg(2+) site.

This sequence belongs to the D-alanine--D-alanine ligase family. Mg(2+) is required as a cofactor. Mn(2+) serves as cofactor.

It localises to the cytoplasm. It carries out the reaction 2 D-alanine + ATP = D-alanyl-D-alanine + ADP + phosphate + H(+). It participates in cell wall biogenesis; peptidoglycan biosynthesis. Cell wall formation. The polypeptide is D-alanine--D-alanine ligase (Burkholderia ambifaria (strain MC40-6)).